A 385-amino-acid chain; its full sequence is Odorant receptor 82a (385 aa).

At 1–32 (MGRLFQLQEYCLRAMGHKDDMDSTDSTALSLK) the chain is on the cytoplasmic side. A helical membrane pass occupies residues 33 to 53 (HISSLIFVISAQYPLISYVAY). The Extracellular segment spans residues 54-62 (NRNDMEKVT). A helical transmembrane segment spans residues 63-83 (ACLSVVFTNMLTVIKISTFLA). Residues 84 to 131 (NRKDFWEMIHRFRKMHEQSASHIPRYREGLDYVAEANKLASFLGRAYC) lie on the Cytoplasmic side of the membrane. Residues 132 to 152 (VSCGLTGLYFMLGPIVKIGVC) traverse the membrane as a helical segment. The Extracellular segment spans residues 153-186 (RWHGTTCDKELPMPMKFPFNDLESPGYEVCFLYT). Residues 187–207 (VLVTVVVVAYASAVDGLFISF) traverse the membrane as a helical segment. Residues 208–257 (AINLRAHFQTLQRQIENWEFPSSEPDTQIRLKSIVEYHVLLLSLSRKLRS) lie on the Cytoplasmic side of the membrane. The chain crosses the membrane as a helical span at residues 258–278 (IYTPTVMGQFVITSLQVGVII). Topologically, residues 279-290 (YQLVTNMDSVMD) are extracellular. The chain crosses the membrane as a helical span at residues 291–311 (LLLYASFFGSIMLQLFIYCYG). Over 312 to 357 (GEIIKAESLQVDTAVRLSNWHLASPKTRTSLSLIILQSQKEVLIRA) the chain is Cytoplasmic. Residues 358 to 378 (GFFVASLANFVGICRTALSLI) traverse the membrane as a helical segment. The Extracellular segment spans residues 379–385 (TLIKSIE).

It belongs to the insect chemoreceptor superfamily. Heteromeric odorant receptor channel (TC 1.A.69) family. Or1a subfamily. Interacts with Orco. Complexes exist early in the endomembrane system in olfactory sensory neurons (OSNs), coupling these complexes to the conserved ciliary trafficking pathway. Expressed in olfactory sensory neurons in the antenna.

Its subcellular location is the cell membrane. Functionally, odorant receptor which mediates acceptance or avoidance behavior, depending on its substrates. The odorant receptor repertoire encodes a large collection of odor stimuli that vary widely in identity, intensity, and duration. May form a complex with Orco to form odorant-sensing units, providing sensitive and prolonged odorant signaling and calcium permeability. In Drosophila melanogaster (Fruit fly), this protein is Odorant receptor 82a (Or82a).